Consider the following 239-residue polypeptide: Ribosomal RNA small subunit methyltransferase G (239 aa).

Residues G78, F83, 129–130 (AE), and R148 each bind S-adenosyl-L-methionine.

It belongs to the methyltransferase superfamily. RNA methyltransferase RsmG family.

The protein resides in the cytoplasm. Its function is as follows. Specifically methylates the N7 position of a guanine in 16S rRNA. The polypeptide is Ribosomal RNA small subunit methyltransferase G (Clostridium perfringens (strain SM101 / Type A)).